The following is a 313-amino-acid chain: Antiviral protein I (313 aa).

The N-terminal stretch at 1-22 is a signal peptide; that stretch reads MKSMLVVTISIWLILAPTSTWA. 2 disulfide bridges follow: C56–C281 and C107–C128. The active site involves Y94. V95 is a binding site for substrate. S143 serves as a coordination point for substrate. Residue Y145 is part of the active site. Residue S197 participates in substrate binding. Active-site residues include E198 and R201. R201 contacts substrate. A propeptide spanning residues 286–313 is cleaved from the precursor; the sequence is NQNAMFPQLIMSTYYNYMVNLGDLFEGF.

Belongs to the ribosome-inactivating protein family. Type 1 RIP subfamily. As to quaternary structure, monomer. Expressed in spring leaves (at protein level). Expressed in roots (at protein level).

The enzyme catalyses Endohydrolysis of the N-glycosidic bond at one specific adenosine on the 28S rRNA.. Possesses antiviral potency. Inhibits viral infection of plants (tobacco mosaic virus). Inhibits protein synthesis. Releases both adenine and guanine from Escherichia coli rRNA in vitro. Activity on guanine is 20 times slower than that on adenine. The sequence is that of Antiviral protein I (PAP1) from Phytolacca americana (American pokeweed).